A 510-amino-acid polypeptide reads, in one-letter code: Lysine--tRNA ligase (510 aa).

Glu420 and Glu427 together coordinate Mg(2+).

The protein belongs to the class-II aminoacyl-tRNA synthetase family. Homodimer. Mg(2+) serves as cofactor.

The protein localises to the cytoplasm. The catalysed reaction is tRNA(Lys) + L-lysine + ATP = L-lysyl-tRNA(Lys) + AMP + diphosphate. The protein is Lysine--tRNA ligase (lysS) of Vibrio cholerae serotype O1 (strain ATCC 39315 / El Tor Inaba N16961).